The following is a 442-amino-acid chain: MINSTNLNLTIKMSRPDEEELVDYDEAAEEILPPAPAAETNGDKADGDKKGSYVGIHSTGFRDFLLKPELLRAISDLGFEHPSEVQQECIPQAILGTDVLCQAKSGMGKTAVFVLAALQQIEPVDGEVSIIILCHTRELAYQIKNEFTRFSKFMTNVRTGVFYGGTPISADQEILANKEKCPHIVVGTPGRTMALVRDKKLNASKVKHFVLDECDKMLEQLDMRRDVQEIFRATPHHKQVMMFSATLSKDIRATCKKFMQSPLEIYVDDETKLTLHGLQQFYLKLEEREKNRKLNDLLDNLEFNQVCIFVKSVQRATQLDALLQECNFPSICIHSGLQQAERISRFQQFKAFEKRILVATDIFGRGIDVERVNVVINYDAPSDADSYLHRVGRAGRFGTKGLAISFVSSDADQEVLQRIQERFTVAIPTLPETVDPATYMTS.

The Q motif signature appears at 59 to 87 (TGFRDFLLKPELLRAISDLGFEHPSEVQQ). The Helicase ATP-binding domain maps to 90–265 (IPQAILGTDV…KKFMQSPLEI (176 aa)). Residue 103–110 (AKSGMGKT) coordinates ATP. The DECD box motif lies at 212-215 (DECD). In terms of domain architecture, Helicase C-terminal spans 277–438 (GLQQFYLKLE…TLPETVDPAT (162 aa)).

This sequence belongs to the DEAD box helicase family. DECD subfamily.

Its subcellular location is the nucleus. The enzyme catalyses ATP + H2O = ADP + phosphate + H(+). Functionally, ATP-binding RNA helicase involved in transcription elongation and required for the export of mRNA out of the nucleus. SUB2 also plays a role in pre-mRNA splicing and spliceosome assembly. May be involved in rDNA and telomeric silencing, and maintenance of genome integrity. This is ATP-dependent RNA helicase SUB2 (SUB2) from Cryptococcus neoformans var. neoformans serotype D (strain JEC21 / ATCC MYA-565) (Filobasidiella neoformans).